The chain runs to 60 residues: DNA gyrase inhibitor YacG (60 aa).

Residues C15, C18, C30, and C34 each contribute to the Zn(2+) site.

It belongs to the DNA gyrase inhibitor YacG family. In terms of assembly, interacts with GyrB. Requires Zn(2+) as cofactor.

Functionally, inhibits all the catalytic activities of DNA gyrase by preventing its interaction with DNA. Acts by binding directly to the C-terminal domain of GyrB, which probably disrupts DNA binding by the gyrase. This is DNA gyrase inhibitor YacG from Bradyrhizobium diazoefficiens (strain JCM 10833 / BCRC 13528 / IAM 13628 / NBRC 14792 / USDA 110).